Reading from the N-terminus, the 287-residue chain is Bifunctional protein FolD (287 aa).

Residues 165–167 (GRS), S190, and I231 contribute to the NADP(+) site.

Belongs to the tetrahydrofolate dehydrogenase/cyclohydrolase family. As to quaternary structure, homodimer.

It catalyses the reaction (6R)-5,10-methylene-5,6,7,8-tetrahydrofolate + NADP(+) = (6R)-5,10-methenyltetrahydrofolate + NADPH. It carries out the reaction (6R)-5,10-methenyltetrahydrofolate + H2O = (6R)-10-formyltetrahydrofolate + H(+). Its pathway is one-carbon metabolism; tetrahydrofolate interconversion. Functionally, catalyzes the oxidation of 5,10-methylenetetrahydrofolate to 5,10-methenyltetrahydrofolate and then the hydrolysis of 5,10-methenyltetrahydrofolate to 10-formyltetrahydrofolate. The protein is Bifunctional protein FolD of Trichodesmium erythraeum (strain IMS101).